The chain runs to 595 residues: Sorting nexin-9 (595 aa).

The region spanning 1–62 (MATKARVMYD…PTDYVEILPN (62 aa)) is the SH3 domain. Residues 89–100 (QTNSSSANSNNQ) show a composition bias toward low complexity. A disordered region spans residues 89-199 (QTNSSSANSN…QRGNSRAGAS (111 aa)). A Phosphoserine modification is found at serine 121. Over residues 129–144 (TDGTSAQRNSSANNWD) the composition is skewed to polar residues. Residues 159-169 (GDDDEWDEDWD) are compositionally biased toward acidic residues. Residue serine 200 is modified to Phosphoserine. The critical for tubulation activity stretch occupies residues 201 to 213 (MKLPLNKFPGFAK). Tyrosine 239 carries the post-translational modification Phosphotyrosine. One can recognise a PX domain in the interval 250 to 360 (FDCVVADPRK…QQFLNFRDEK (111 aa)). A 1,2-diacyl-sn-glycero-3-phospho-(1D-myo-inositol-4,5-bisphosphate)-binding residues include arginine 286, lysine 288, and arginine 327. Position 288 is an N6-acetyllysine (lysine 288). Residues 392–595 (LIEIEQKCDA…RQALSRFPVM (204 aa)) enclose the BAR domain.

It belongs to the sorting nexin family. As to quaternary structure, homodimer, and homooligomer. Heterodimer with SNX18. Interacts with ITCH. Interacts (via SH3 domain) with TNK2, WASL and ACTR3. Identified in a complex with TNK2 and clathrin heavy chains. Identified in a complex with the AP-2 complex, clathrin and DNM2. Interacts (via SH3 domain) with DNM1 and DNM2. Identified in an oligomeric complex containing DNM1 and SNX9. Interacts with FCHSD1. Interacts with ADAM9 and ADAM15 cytoplasmic tails. In terms of processing, phosphorylated on tyrosine residues by TNK2. Phosphorylation promotes its activity in the degradation of EGFR. Ubiquitinated by ITCH. Detected in inner ear vestibula and in the cuticular plate of cochlear hair cells (at protein level).

The protein resides in the cytoplasmic vesicle membrane. It localises to the cell membrane. Its subcellular location is the cytoplasmic vesicle. It is found in the clathrin-coated vesicle. The protein localises to the golgi apparatus. The protein resides in the trans-Golgi network. It localises to the cell projection. Its subcellular location is the ruffle. It is found in the cytoplasm. Functionally, involved in endocytosis and intracellular vesicle trafficking, both during interphase and at the end of mitosis. Required for efficient progress through mitosis and cytokinesis. Required for normal formation of the cleavage furrow at the end of mitosis. Plays a role in endocytosis via clathrin-coated pits, but also clathrin-independent, actin-dependent fluid-phase endocytosis. Plays a role in macropinocytosis. Promotes internalization of TNFR. Promotes degradation of EGFR after EGF signaling. Stimulates the GTPase activity of DNM1. Promotes DNM1 oligomerization. Promotes activation of the Arp2/3 complex by WASL, and thereby plays a role in the reorganization of the F-actin cytoskeleton. Binds to membranes enriched in phosphatidylinositol 4,5-bisphosphate and promotes membrane tubulation. Has lower affinity for membranes enriched in phosphatidylinositol 3-phosphate. The protein is Sorting nexin-9 (Snx9) of Mus musculus (Mouse).